The chain runs to 152 residues: MSNLVYFSSVSENTHRFVEKLGLPATRIPIHGRIQVDEPYVLVLPTYGGGHANGPDPDRGGYVPKQVIAFLNDEHNRSLIRGVIAAGNTNFGAEFGYAGVIVSRKCGVPFLYRFELMGTTDDVFAVRQGLTDFWADARKDQTCHQPSQLQNL.

The protein belongs to the NrdI family.

In terms of biological role, probably involved in ribonucleotide reductase function. This Mycolicibacterium vanbaalenii (strain DSM 7251 / JCM 13017 / BCRC 16820 / KCTC 9966 / NRRL B-24157 / PYR-1) (Mycobacterium vanbaalenii) protein is Protein NrdI.